The primary structure comprises 263 residues: MAVTTKQLIQWKQKGRPIVALTAYDYTIAQLLDNAGVDLILVGDSLGMVTLGYETTLPVTLEEMIHHAKAVRRAVKQALMVVDLPFLTYQESPQQAIHSAGRILKETGAQAVKLESGNEAIAQTVKKLTSIGIPVMGHIGLIPQSVHQFGGYPQQGNAPDASARILTEALALAEAGAFALVLEHIKADLAKEITEKVSIPTIGIGAGAYCDGQILVINDVLGLSHWQPPFAKPYVNLRETITQAVKEYSLEVKKRKFPQPPSP.

Mg(2+)-binding residues include D44 and D83. 3-methyl-2-oxobutanoate-binding positions include 44 to 45, D83, and K113; that span reads DS. A Mg(2+)-binding site is contributed by E115. The Proton acceptor role is filled by E183.

The protein belongs to the PanB family. As to quaternary structure, homodecamer; pentamer of dimers. It depends on Mg(2+) as a cofactor.

The protein localises to the cytoplasm. The catalysed reaction is 3-methyl-2-oxobutanoate + (6R)-5,10-methylene-5,6,7,8-tetrahydrofolate + H2O = 2-dehydropantoate + (6S)-5,6,7,8-tetrahydrofolate. It functions in the pathway cofactor biosynthesis; (R)-pantothenate biosynthesis; (R)-pantoate from 3-methyl-2-oxobutanoate: step 1/2. Functionally, catalyzes the reversible reaction in which hydroxymethyl group from 5,10-methylenetetrahydrofolate is transferred onto alpha-ketoisovalerate to form ketopantoate. The polypeptide is 3-methyl-2-oxobutanoate hydroxymethyltransferase (Trichodesmium erythraeum (strain IMS101)).